Here is a 230-residue protein sequence, read N- to C-terminus: Orotidine 5'-phosphate decarboxylase (230 aa).

Substrate contacts are provided by residues Asp-10, Lys-31, 58 to 67 (DLKLHDIPNT), Thr-117, Arg-179, Gln-188, Gly-208, and Arg-209. The active-site Proton donor is the Lys-60.

It belongs to the OMP decarboxylase family. Type 1 subfamily. Homodimer.

The catalysed reaction is orotidine 5'-phosphate + H(+) = UMP + CO2. Its pathway is pyrimidine metabolism; UMP biosynthesis via de novo pathway; UMP from orotate: step 2/2. Catalyzes the decarboxylation of orotidine 5'-monophosphate (OMP) to uridine 5'-monophosphate (UMP). The protein is Orotidine 5'-phosphate decarboxylase of Staphylococcus aureus (strain bovine RF122 / ET3-1).